The chain runs to 646 residues: NADP-dependent malic enzyme 4, chloroplastic (646 aa).

Residues 1–74 constitute a chloroplast transit peptide; that stretch reads MISLTPSLFL…LETSAADIVP (74 aa). Y194 acts as the Proton donor in catalysis. R247 provides a ligand contact to NADP(+). K265 acts as the Proton acceptor in catalysis. 3 residues coordinate a divalent metal cation: E337, D338, and D361. Residues D361, 390–406, and N502 each bind NADP(+); that span reads LFLG…ELIA.

This sequence belongs to the malic enzymes family. Homodimer and homotetramer. Mg(2+) is required as a cofactor. It depends on Mn(2+) as a cofactor. As to expression, expressed in leaves, stems, flowers and roots, mainly in vascular system. In roots, present in the stele, including the vascular tissue and the pericycle, mainly at emerging lateral roots and at root tips.

It is found in the plastid. It localises to the chloroplast. The enzyme catalyses (S)-malate + NADP(+) = pyruvate + CO2 + NADPH. It catalyses the reaction oxaloacetate + H(+) = pyruvate + CO2. It participates in photosynthesis; C3 acid pathway. Its function is as follows. The chloroplastic ME isoform decarboxylates malate shuttled from neighboring mesophyll cells. The CO(2) released is then refixed by ribulose-bisphosphate carboxylase. This pathway eliminates the photorespiratory loss of CO(2) that occurs in most plants. The sequence is that of NADP-dependent malic enzyme 4, chloroplastic (NADP-ME4) from Arabidopsis thaliana (Mouse-ear cress).